The following is a 321-amino-acid chain: Phospho-N-acetylmuramoyl-pentapeptide-transferase (321 aa).

Helical transmembrane passes span 1–21, 50–70, 76–96, 112–132, 140–160, 176–196, 200–220, 225–245, 250–270, and 300–320; these read MIFVYALLALVITFVLVPVLI, MGGLTFLLSIVITSLVAIIFV, IILLLFVTIGFGLIGFIDDYI, FLAQIGIAIIFFVLSNVFHLV, IPFTNVAIPLSFAYVIFIVFW, GLATGLSIIGFTMYAIMSFVL, AIGIFCIIMLFALLGFLPYNI, VFMGDTGSLALGGIFATISIM, LSLIFIGLVFVIETLSVMLQV, and VVTVFWAVGLISGLIGLWIGV.

The protein belongs to the glycosyltransferase 4 family. MraY subfamily. Mg(2+) serves as cofactor.

The protein resides in the cell membrane. The enzyme catalyses UDP-N-acetyl-alpha-D-muramoyl-L-alanyl-gamma-D-glutamyl-L-lysyl-D-alanyl-D-alanine + di-trans,octa-cis-undecaprenyl phosphate = Mur2Ac(oyl-L-Ala-gamma-D-Glu-L-Lys-D-Ala-D-Ala)-di-trans,octa-cis-undecaprenyl diphosphate + UMP. The protein operates within cell wall biogenesis; peptidoglycan biosynthesis. Functionally, catalyzes the initial step of the lipid cycle reactions in the biosynthesis of the cell wall peptidoglycan: transfers peptidoglycan precursor phospho-MurNAc-pentapeptide from UDP-MurNAc-pentapeptide onto the lipid carrier undecaprenyl phosphate, yielding undecaprenyl-pyrophosphoryl-MurNAc-pentapeptide, known as lipid I. This chain is Phospho-N-acetylmuramoyl-pentapeptide-transferase, found in Staphylococcus aureus (strain Mu50 / ATCC 700699).